Consider the following 502-residue polypeptide: Histidine--tRNA ligase (502 aa).

This sequence belongs to the class-II aminoacyl-tRNA synthetase family. As to quaternary structure, homodimer.

It is found in the cytoplasm. It catalyses the reaction tRNA(His) + L-histidine + ATP = L-histidyl-tRNA(His) + AMP + diphosphate + H(+). The polypeptide is Histidine--tRNA ligase (Brucella suis (strain ATCC 23445 / NCTC 10510)).